The primary structure comprises 189 residues: Auxin-responsive protein IAA6 (189 aa).

The short motif at 13 to 17 (LRLGL) is the EAR-like (transcriptional repression) element. The PB1 domain occupies 93–178 (IGYVKVSMDG…SCKRLRIVKR (86 aa)).

It belongs to the Aux/IAA family. Homodimers and heterodimers. Interacts with TPL. As to expression, highly expressed in stems and flowers.

It localises to the nucleus. Aux/IAA proteins are short-lived transcriptional factors that function as repressors of early auxin response genes at low auxin concentrations. Repression is thought to result from the interaction with auxin response factors (ARFs), proteins that bind to the auxin-responsive promoter element (AuxRE). Formation of heterodimers with ARF proteins may alter their ability to modulate early auxin response genes expression. The protein is Auxin-responsive protein IAA6 (IAA6) of Arabidopsis thaliana (Mouse-ear cress).